Consider the following 695-residue polypeptide: MVMKFKMSKNVICYTWLSVCLSSAIPAFAVQPTLKPSDISIPAISEESQLATKRATTRLTQSHYRKIKLDDDFSEKIFDRYIKNLDFNHNTFLQSDIDELRQKYGTKLDEQLNQGDLSAAFDIYDVMMKRRYERYTYALSLLDKEPDLNGQDQIEIDREKAAAPQTEADANKLWDARVKNDIINLKLKDKKWSEIKAKLTKRYNLAIRRLTQTKADDIVQIYLNAFAREIDPHTSYLSPRTAKSFNESINLSLEGIGTTLQSEDDEISIKSLVPGAPAERSKKLHPGDKIIGVGQATGDIEDVVGWRLEDLVEKIKGKKGTKVRLEIEPAKGGKSRIITLVRDKVRIEDQAAKLTFEKVSGKNIAVIKIPSFYIGLTEDVKKLLVKLENQKAEALIVDLRENGGGALTEAVALSGLFITDGPVVQVRDAYQRIRVHEDDDATQQYKGLLFVMINRYSASASEIFAAAMQDYRRGIIIGQNTFGKGTVQQSRSLNFIYDLDQSPLGVLQYTIQKFYRVNGGSTQLKGVAADINFPEIIDAKEYGEDKEDNALAWDKIPSASYMEVGNINYIDNAVNILNEKHLARIAKDPEFVALNEELKVRNERRDRKFLSLNYKMRKAENDKDDARRLKDLNERFKREGKKALKDIDDLPKDYEAPDFFLKEAEKIAADFVIFNSDQKINQANGLSEAKTESKK.

Positions Met-1 to Ala-29 are cleaved as a signal peptide. The PDZ domain occupies Ile-256 to Lys-316. Catalysis depends on charge relay system residues Ser-459, Asp-470, and Lys-484.

Belongs to the peptidase S41A family.

Its subcellular location is the cell inner membrane. The enzyme catalyses The enzyme shows specific recognition of a C-terminal tripeptide, Xaa-Yaa-Zaa, in which Xaa is preferably Ala or Leu, Yaa is preferably Ala or Tyr, and Zaa is preferably Ala, but then cleaves at a variable distance from the C-terminus. A typical cleavage is -Ala-Ala-|-Arg-Ala-Ala-Lys-Glu-Asn-Tyr-Ala-Leu-Ala-Ala.. Its function is as follows. Involved in the cleavage of a C-terminal peptide of 11 residues from the precursor form of penicillin-binding protein 3 (PBP3). May be involved in protection of the bacterium from thermal and osmotic stresses. This chain is Tail-specific protease (prc), found in Haemophilus influenzae (strain ATCC 51907 / DSM 11121 / KW20 / Rd).